Reading from the N-terminus, the 127-residue chain is Major sperm protein 55/57 (127 aa).

A2 is modified (N-acetylalanine). In terms of domain architecture, MSP spans D9–N126.

In terms of tissue distribution, sperm.

The protein resides in the cell projection. It localises to the pseudopodium. Its subcellular location is the cytoplasm. The protein localises to the cytoskeleton. Central component in molecular interactions underlying sperm crawling. Forms an extensive filament system that extends from sperm villipoda, along the leading edge of the pseudopod. The sequence is that of Major sperm protein 55/57 (msp-55) from Caenorhabditis elegans.